The sequence spans 689 residues: Protein CFAP20DC (689 aa).

Disordered regions lie at residues 143–179, 217–236, 241–262, 333–424, and 583–660; these read GPPP…TVEK, LPIM…NNNR, LKST…NNTN, SKES…PSEL, and SIST…LSVE. The segment covering 150 to 176 has biased composition (polar residues); it reads RRSNMRISSETVRSVGSKNNRSCQPST. The span at 343–359 shows a compositional bias: polar residues; sequence EESQSVPKDIFTFSSRP. A compositionally biased stretch (acidic residues) spans 394 to 405; it reads SEDDFYGGDSSE. Over residues 411–421 the composition is skewed to polar residues; the sequence is IQGSRGPTTGP. Over residues 583 to 593 the composition is skewed to low complexity; it reads SISTSSDDTTT.

In Macaca fascicularis (Crab-eating macaque), this protein is Protein CFAP20DC (CFAP20DC).